Consider the following 106-residue polypeptide: Large ribosomal subunit protein uL24 (106 aa).

It belongs to the universal ribosomal protein uL24 family. As to quaternary structure, part of the 50S ribosomal subunit.

Functionally, one of two assembly initiator proteins, it binds directly to the 5'-end of the 23S rRNA, where it nucleates assembly of the 50S subunit. One of the proteins that surrounds the polypeptide exit tunnel on the outside of the subunit. This chain is Large ribosomal subunit protein uL24, found in Marinobacter nauticus (strain ATCC 700491 / DSM 11845 / VT8) (Marinobacter aquaeolei).